Here is a 159-residue protein sequence, read N- to C-terminus: Ribosomal RNA large subunit methyltransferase H (159 aa).

S-adenosyl-L-methionine-binding positions include Leu-76, Gly-108, and 127 to 132 (FSKMTL).

It belongs to the RNA methyltransferase RlmH family. In terms of assembly, homodimer.

It localises to the cytoplasm. The catalysed reaction is pseudouridine(1915) in 23S rRNA + S-adenosyl-L-methionine = N(3)-methylpseudouridine(1915) in 23S rRNA + S-adenosyl-L-homocysteine + H(+). Its function is as follows. Specifically methylates the pseudouridine at position 1915 (m3Psi1915) in 23S rRNA. The sequence is that of Ribosomal RNA large subunit methyltransferase H from Bacillus thuringiensis subsp. konkukian (strain 97-27).